Here is a 178-residue protein sequence, read N- to C-terminus: Translation initiation factor IF-3 (178 aa).

Positions 1-20 are disordered; that stretch reads MRRPFKAAAPTKDGPRSNRD.

The protein belongs to the IF-3 family. In terms of assembly, monomer.

The protein resides in the cytoplasm. Its function is as follows. IF-3 binds to the 30S ribosomal subunit and shifts the equilibrium between 70S ribosomes and their 50S and 30S subunits in favor of the free subunits, thus enhancing the availability of 30S subunits on which protein synthesis initiation begins. In Mesorhizobium japonicum (strain LMG 29417 / CECT 9101 / MAFF 303099) (Mesorhizobium loti (strain MAFF 303099)), this protein is Translation initiation factor IF-3.